The sequence spans 179 residues: Large ribosomal subunit protein uL5 (179 aa).

It belongs to the universal ribosomal protein uL5 family. As to quaternary structure, part of the 50S ribosomal subunit; part of the 5S rRNA/L5/L18/L25 subcomplex. Contacts the 5S rRNA and the P site tRNA. Forms a bridge to the 30S subunit in the 70S ribosome.

In terms of biological role, this is one of the proteins that bind and probably mediate the attachment of the 5S RNA into the large ribosomal subunit, where it forms part of the central protuberance. In the 70S ribosome it contacts protein S13 of the 30S subunit (bridge B1b), connecting the 2 subunits; this bridge is implicated in subunit movement. Contacts the P site tRNA; the 5S rRNA and some of its associated proteins might help stabilize positioning of ribosome-bound tRNAs. The sequence is that of Large ribosomal subunit protein uL5 from Listeria innocua serovar 6a (strain ATCC BAA-680 / CLIP 11262).